We begin with the raw amino-acid sequence, 339 residues long: Biotin synthase (339 aa).

Positions 51 to 278 (SEVELATLLS…KARVRLSAGR (228 aa)) constitute a Radical SAM core domain. [4Fe-4S] cluster-binding residues include cysteine 66, cysteine 70, and cysteine 73. Positions 110, 141, 201, and 273 each coordinate [2Fe-2S] cluster.

Belongs to the radical SAM superfamily. Biotin synthase family. As to quaternary structure, homodimer. It depends on [4Fe-4S] cluster as a cofactor. [2Fe-2S] cluster serves as cofactor.

It carries out the reaction (4R,5S)-dethiobiotin + (sulfur carrier)-SH + 2 reduced [2Fe-2S]-[ferredoxin] + 2 S-adenosyl-L-methionine = (sulfur carrier)-H + biotin + 2 5'-deoxyadenosine + 2 L-methionine + 2 oxidized [2Fe-2S]-[ferredoxin]. It functions in the pathway cofactor biosynthesis; biotin biosynthesis; biotin from 7,8-diaminononanoate: step 2/2. Functionally, catalyzes the conversion of dethiobiotin (DTB) to biotin by the insertion of a sulfur atom into dethiobiotin via a radical-based mechanism. The protein is Biotin synthase of Herminiimonas arsenicoxydans.